A 1064-amino-acid chain; its full sequence is Serine/threonine protein kinase KIN1 (1064 aa).

The interval 1–113 is disordered; the sequence is MDDYHVNTAF…SSQGMPKQFH (113 aa). The span at 8 to 36 shows a compositional bias: polar residues; sequence TAFSMGRGNQQDDGNSESNSMHTQPSTMA. The segment covering 74–91 has biased composition (basic and acidic residues); sequence AEQKERQVELEGKSRENA. Residues 93–108 are compositionally biased toward polar residues; the sequence is KPNTTSQSRVSSSQGM. A Protein kinase domain is found at 120–398; it reads WEFVETVGAG…LKQVVEHHWM (279 aa). ATP is bound by residues 126 to 134 and lysine 149; that span reads VGAGSMGKV. The active-site Proton acceptor is the aspartate 269. Serine 534 carries the post-translational modification Phosphoserine. The interval 549 to 621 is disordered; the sequence is SEPEATLATK…SPTPQGNDYQ (73 aa). The segment covering 557–571 has biased composition (polar residues); it reads TKDTSVPFTPKNSDG. Serine 593 is subject to Phosphoserine. The segment covering 598–608 has biased composition (basic and acidic residues); the sequence is KSSDNQRREME. The residue at position 646 (serine 646) is a Phosphoserine. Disordered stretches follow at residues 652 to 672, 694 to 714, 762 to 797, 823 to 843, and 958 to 1016; these read TIEQ…QKTH, MNEP…FPAL, EGSD…HARR, LESS…QTND, and HESI…GMTT. Residues 654–670 show a composition bias toward polar residues; sequence EQTSVNSNNSINKPVQK. Serine 764 carries the phosphoserine modification. The segment covering 779–794 has biased composition (basic residues); it reads KGRKLHPSARAKSVGH. 3 stretches are compositionally biased toward polar residues: residues 832–843, 963–989, and 998–1016; these read DSLGNVTSQTND, RQGS…SITE, and GTSL…GMTT. Residue serine 986 is modified to Phosphoserine. The KA1 domain maps to 1015–1064; sequence TTTEKEPIKFEIHIVKVRIVGLAGVHFKKISGNTWLYKELASSILKELKL.

The protein belongs to the protein kinase superfamily. CAMK Ser/Thr protein kinase family. NIM1 subfamily. As to quaternary structure, interacts with SEC9 and SRO7. In terms of processing, autophosphorylated.

The protein resides in the cytoplasm. It localises to the cell membrane. It catalyses the reaction L-seryl-[protein] + ATP = O-phospho-L-seryl-[protein] + ADP + H(+). It carries out the reaction L-threonyl-[protein] + ATP = O-phospho-L-threonyl-[protein] + ADP + H(+). Functionally, serine/threonine protein kinase involved in the regulation of exocytosis. Induces phosphorylation of SEC9 and its release from the plasma membrane to the cytosol. The chain is Serine/threonine protein kinase KIN1 (KIN1) from Saccharomyces cerevisiae (strain ATCC 204508 / S288c) (Baker's yeast).